The sequence spans 245 residues: DNA repair protein RecO (245 aa).

It belongs to the RecO family.

Functionally, involved in DNA repair and RecF pathway recombination. In Anaplasma phagocytophilum (strain HZ), this protein is DNA repair protein RecO.